The following is a 341-amino-acid chain: Glycerol-3-phosphate dehydrogenase [NAD(P)+] (341 aa).

NADPH-binding residues include serine 14, phenylalanine 15, arginine 35, and lysine 108. Sn-glycerol 3-phosphate is bound by residues lysine 108 and glycine 136. Alanine 140 provides a ligand contact to NADPH. 5 residues coordinate sn-glycerol 3-phosphate: lysine 191, aspartate 244, serine 254, arginine 255, and asparagine 256. The active-site Proton acceptor is lysine 191. NADPH is bound at residue arginine 255. Residues valine 279 and glutamate 281 each contribute to the NADPH site.

The protein belongs to the NAD-dependent glycerol-3-phosphate dehydrogenase family.

It localises to the cytoplasm. It catalyses the reaction sn-glycerol 3-phosphate + NAD(+) = dihydroxyacetone phosphate + NADH + H(+). It carries out the reaction sn-glycerol 3-phosphate + NADP(+) = dihydroxyacetone phosphate + NADPH + H(+). The protein operates within membrane lipid metabolism; glycerophospholipid metabolism. Catalyzes the reduction of the glycolytic intermediate dihydroxyacetone phosphate (DHAP) to sn-glycerol 3-phosphate (G3P), the key precursor for phospholipid synthesis. This Pseudomonas putida (strain ATCC 700007 / DSM 6899 / JCM 31910 / BCRC 17059 / LMG 24140 / F1) protein is Glycerol-3-phosphate dehydrogenase [NAD(P)+].